We begin with the raw amino-acid sequence, 464 residues long: Ubiquinone biosynthesis monooxygenase COQ6, mitochondrial (464 aa).

The N-terminal 24 residues, 1–24, are a transit peptide targeting the mitochondrion; it reads MRCLGGSSLSRLLRMLSQSQGRAL.

The protein belongs to the UbiH/COQ6 family. As to quaternary structure, component of a multi-subunit COQ enzyme complex, composed of at least coq3, coq4, coq5, coq6, coq7 and coq9. Interacts with coq8b and coq7. The cofactor is FAD.

It localises to the mitochondrion inner membrane. It is found in the golgi apparatus. The protein resides in the cell projection. The enzyme catalyses a 4-hydroxy-3-(all-trans-polyprenyl)benzoate + 2 reduced [2Fe-2S]-[ferredoxin] + O2 + 2 H(+) = a 3,4-dihydroxy-5-(all-trans-polyprenyl)benzoate + 2 oxidized [2Fe-2S]-[ferredoxin] + H2O. The catalysed reaction is a 2-methoxy-6-(all-trans-polyprenyl)phenol + 2 reduced [2Fe-2S]-[ferredoxin] + O2 + 2 H(+) = a 2-methoxy-6-(all-trans-polyprenyl)benzene-1,4-diol + 2 oxidized [2Fe-2S]-[ferredoxin] + H2O. It functions in the pathway cofactor biosynthesis; ubiquinone biosynthesis. Functionally, FAD-dependent monooxygenase required for two non-consecutive steps during ubiquinone biosynthesis. Required for the C5-ring hydroxylation during ubiquinone biosynthesis by catalyzing the hydroxylation of 4-hydroxy-3-(all-trans-polyprenyl)benzoic acid to 3,4-dihydroxy-5-(all-trans-polyprenyl)benzoic acid. Also acts downstream of coq4, for the C1-hydroxylation during ubiquinone biosynthesis by catalyzing the hydroxylation of 2-methoxy-6-(all-trans-polyprenyl)phenol to 2-methoxy-6-(all-trans-polyprenyl)benzene-1,4-diol. The electrons required for the hydroxylation reaction are funneled indirectly to coq6 from NADPH via a ferredoxin/ferredoxin reductase system. In Xenopus tropicalis (Western clawed frog), this protein is Ubiquinone biosynthesis monooxygenase COQ6, mitochondrial.